The primary structure comprises 1043 residues: Ack-related non-receptor tyrosine kinase (1043 aa).

The Protein kinase domain maps to 113-379 (ITLCKELGQG…SDIVAKFPER (267 aa)). Residues 119 to 127 (LGQGEFGSV) and lysine 146 contribute to the ATP site. Aspartate 241 acts as the Proton acceptor in catalysis. The SH3 domain maps to 379-444 (RRAQSVRAVV…RPTDTVAHLG (66 aa)). The interval 443–481 (LGSEPPCSNGTIENGFSEKEKGGKKNKKAEKESERERKK) is disordered. The segment covering 458–481 (FSEKEKGGKKNKKAEKESERERKK) has biased composition (basic and acidic residues). Residues 484–498 (ISEPVGDVRHTCHVG) enclose the CRIB domain. Disordered stretches follow at residues 514 to 644 (MCPT…SAAN), 790 to 842 (KINE…GWSS), 859 to 898 (KQAS…LSVR), and 932 to 993 (LIDG…RQFP). Residues 516-543 (PTSSSPSTSRGSQASPAPSHTSSSTTSS) show a composition bias toward low complexity. Residues 610-624 (GNQHSVQVHDQFSSL) are compositionally biased toward polar residues. Low complexity predominate over residues 630–644 (SLTPTAPPLTASAAN). The stretch at 785–812 (EQEVRKINEKSAREHRKTEDLLREERQK) forms a coiled coil. Positions 790 to 818 (KINEKSAREHRKTEDLLREERQKEQKPGE) are enriched in basic and acidic residues. Polar residues predominate over residues 825 to 842 (PAESLYSTRTPQQEGWSS). The span at 870-884 (PTSSRLSTLDRSSIS) shows a compositional bias: low complexity.

This sequence belongs to the protein kinase superfamily. Tyr protein kinase family. It depends on Mg(2+) as a cofactor.

The catalysed reaction is L-tyrosyl-[protein] + ATP = O-phospho-L-tyrosyl-[protein] + ADP + H(+). It carries out the reaction L-seryl-[protein] + ATP = O-phospho-L-seryl-[protein] + ADP + H(+). It catalyses the reaction L-threonyl-[protein] + ATP = O-phospho-L-threonyl-[protein] + ADP + H(+). Its function is as follows. Probable tyrosine protein kinase which plays a role in vulva development, probably by acting as a negative regulator of the let-23/EGFR and let-60/ras pathway. Involved in the negative regulation of germline development. In Caenorhabditis elegans, this protein is Ack-related non-receptor tyrosine kinase.